The following is a 258-amino-acid chain: Acyl-[acyl-carrier-protein]--UDP-N-acetylglucosamine O-acyltransferase (258 aa).

Belongs to the transferase hexapeptide repeat family. LpxA subfamily. As to quaternary structure, homotrimer.

It localises to the cytoplasm. The enzyme catalyses a (3R)-hydroxyacyl-[ACP] + UDP-N-acetyl-alpha-D-glucosamine = a UDP-3-O-[(3R)-3-hydroxyacyl]-N-acetyl-alpha-D-glucosamine + holo-[ACP]. The protein operates within glycolipid biosynthesis; lipid IV(A) biosynthesis; lipid IV(A) from (3R)-3-hydroxytetradecanoyl-[acyl-carrier-protein] and UDP-N-acetyl-alpha-D-glucosamine: step 1/6. Functionally, involved in the biosynthesis of lipid A, a phosphorylated glycolipid that anchors the lipopolysaccharide to the outer membrane of the cell. The chain is Acyl-[acyl-carrier-protein]--UDP-N-acetylglucosamine O-acyltransferase from Pseudomonas savastanoi pv. phaseolicola (strain 1448A / Race 6) (Pseudomonas syringae pv. phaseolicola (strain 1448A / Race 6)).